The sequence spans 200 residues: Probable GTP-binding protein EngB (200 aa).

Residues 26–200 form the EngB-type G domain; the sequence is SIPEIAIAGR…IYEIAQCIKK (175 aa). Residues 34–41, 61–65, 80–83, 147–150, and 179–181 each bind GTP; these read GRSNVGKS, GCTKQ, DLPG, TKID, and TSS. Residues Ser-41 and Thr-63 each coordinate Mg(2+).

This sequence belongs to the TRAFAC class TrmE-Era-EngA-EngB-Septin-like GTPase superfamily. EngB GTPase family. It depends on Mg(2+) as a cofactor.

Functionally, necessary for normal cell division and for the maintenance of normal septation. This chain is Probable GTP-binding protein EngB, found in Ehrlichia chaffeensis (strain ATCC CRL-10679 / Arkansas).